The chain runs to 125 residues: Small ribosomal subunit protein eS8 (125 aa).

Belongs to the eukaryotic ribosomal protein eS8 family. As to quaternary structure, part of the 30S ribosomal subunit.

In Methanocorpusculum labreanum (strain ATCC 43576 / DSM 4855 / Z), this protein is Small ribosomal subunit protein eS8.